A 305-amino-acid chain; its full sequence is Tetraspanin-12 (305 aa).

Topologically, residues 1 to 12 are cytoplasmic; sequence MAREDSVKCLRC. S-palmitoyl cysteine attachment occurs at residues Cys-9 and Cys-12. The chain crosses the membrane as a helical span at residues 13 to 33; that stretch reads LLYALNLLFWLMSISVLAVSA. At 34-59 the chain is on the extracellular side; the sequence is WMRDYLNNVLTLTAETRVEEAVILTY. A helical membrane pass occupies residues 60–80; sequence FPVVHPVMIAVCCFLIIVGML. At 81–89 the chain is on the cytoplasmic side; sequence GYCGTVKRN. The S-palmitoyl cysteine moiety is linked to residue Cys-83. A helical transmembrane segment spans residues 90–110; that stretch reads LLLLAWYFGSLLVIFCVELAC. Over 111 to 224 the chain is Extracellular; that stretch reads GVWTYEQELM…RGTKQLQVLR (114 aa). Residues 225–245 form a helical membrane-spanning segment; the sequence is FLGISIGVTQILAMILTITLL. Residues 246–305 lie on the Cytoplasmic side of the membrane; the sequence is WALYYDRREPGTDQMMSLKNDNSQHLSCPSVELLKPSLSRIFEHTSMANSFNTHFEMEEL.

The protein belongs to the tetraspanin (TM4SF) family. Component of a complex, at least composed of TSPAN12, FZD4 and norrin (NDP). Interacts (when palmitoylated) with ADAM10. Interacts with MMP14/MT1-MMP. Post-translationally, palmitoylated; required for interaction with ADAM10. The precise position of palmitoylated residues is unclear and occurs either on Cys-9, Cys-12 and/or Cys-83.

The protein localises to the cell membrane. In terms of biological role, regulator of cell surface receptor signal transduction. Plays a central role in retinal vascularization by regulating norrin (NDP) signal transduction. Acts in concert with norrin (NDP) to promote FZD4 multimerization and subsequent activation of FZD4, leading to promote accumulation of beta-catenin (CTNNB1) and stimulate LEF/TCF-mediated transcriptional programs. Suprisingly, it only activates the norrin (NDP)-dependent activation of FZD4, while it does not activate the Wnt-dependent activation of FZD4, suggesting the existence of a Wnt-independent signaling that also promote accumulation the beta-catenin (CTNNB1). Acts as a regulator of membrane proteinases such as ADAM10 and MMP14/MT1-MMP. Activates ADAM10-dependent cleavage activity of amyloid precursor protein (APP). Activates MMP14/MT1-MMP-dependent cleavage activity. This Homo sapiens (Human) protein is Tetraspanin-12 (TSPAN12).